Reading from the N-terminus, the 606-residue chain is Arginine--tRNA ligase (606 aa).

Residues 126–136 carry the 'HIGH' region motif; sequence PNTNKPLHLGH.

The protein belongs to the class-I aminoacyl-tRNA synthetase family. Monomer.

The protein resides in the cytoplasm. It carries out the reaction tRNA(Arg) + L-arginine + ATP = L-arginyl-tRNA(Arg) + AMP + diphosphate. The sequence is that of Arginine--tRNA ligase from Phocaeicola vulgatus (strain ATCC 8482 / DSM 1447 / JCM 5826 / CCUG 4940 / NBRC 14291 / NCTC 11154) (Bacteroides vulgatus).